The primary structure comprises 321 residues: tRNA pseudouridine synthase B (321 aa).

Asp-47 serves as the catalytic Nucleophile.

The protein belongs to the pseudouridine synthase TruB family. Type 1 subfamily.

The catalysed reaction is uridine(55) in tRNA = pseudouridine(55) in tRNA. In terms of biological role, responsible for synthesis of pseudouridine from uracil-55 in the psi GC loop of transfer RNAs. This is tRNA pseudouridine synthase B from Shewanella baltica (strain OS223).